Reading from the N-terminus, the 56-residue chain is Large ribosomal subunit protein bL33C (56 aa).

The protein belongs to the bacterial ribosomal protein bL33 family.

This chain is Large ribosomal subunit protein bL33C, found in Sorangium cellulosum (strain So ce56) (Polyangium cellulosum (strain So ce56)).